We begin with the raw amino-acid sequence, 555 residues long: Intraflagellar transport protein 56 (555 aa).

3 TPR repeats span residues 57 to 90, 151 to 184, and 393 to 426; these read LKNL…EDPD, IEDQ…HRDY, and DDFN…KYRN.

It belongs to the IFT56 family. In terms of assembly, component of the IFT complex B.

Its subcellular location is the cell projection. The protein resides in the cilium. The protein localises to the flagellum. Its function is as follows. Component of the intraflagellar transport (IFT) complex B required for transport of proteins in the motile cilium. Required for transport of specific ciliary cargo proteins related to motility, while it is neither required for IFT complex B assembly or motion nor for cilium assembly. The protein is Intraflagellar transport protein 56 of Chlamydomonas reinhardtii (Chlamydomonas smithii).